The primary structure comprises 295 residues: 4-diphosphocytidyl-2-C-methyl-D-erythritol kinase (295 aa).

Residue lysine 25 is part of the active site. 108 to 118 lines the ATP pocket; the sequence is PMGSGLGGGSS. Aspartate 150 is a catalytic residue.

The protein belongs to the GHMP kinase family. IspE subfamily.

The catalysed reaction is 4-CDP-2-C-methyl-D-erythritol + ATP = 4-CDP-2-C-methyl-D-erythritol 2-phosphate + ADP + H(+). It participates in isoprenoid biosynthesis; isopentenyl diphosphate biosynthesis via DXP pathway; isopentenyl diphosphate from 1-deoxy-D-xylulose 5-phosphate: step 3/6. In terms of biological role, catalyzes the phosphorylation of the position 2 hydroxy group of 4-diphosphocytidyl-2C-methyl-D-erythritol. The sequence is that of 4-diphosphocytidyl-2-C-methyl-D-erythritol kinase from Pasteurella multocida (strain Pm70).